The primary structure comprises 243 residues: Uridylate kinase (243 aa).

An ATP-binding site is contributed by 14–17 (KLSG). Position 57 (Gly57) interacts with UMP. ATP-binding residues include Gly58 and Arg62. UMP-binding positions include Asp77 and 139–146 (TGRPYFTT). ATP is bound by residues Asn167, Tyr173, and Asp176.

It belongs to the UMP kinase family. Homohexamer.

The protein localises to the cytoplasm. The catalysed reaction is UMP + ATP = UDP + ADP. It participates in pyrimidine metabolism; CTP biosynthesis via de novo pathway; UDP from UMP (UMPK route): step 1/1. With respect to regulation, inhibited by UTP. Functionally, catalyzes the reversible phosphorylation of UMP to UDP. The chain is Uridylate kinase from Mycoplasmopsis pulmonis (strain UAB CTIP) (Mycoplasma pulmonis).